The following is a 603-amino-acid chain: DNA mismatch repair protein MutL (603 aa).

The protein belongs to the DNA mismatch repair MutL/HexB family.

Its function is as follows. This protein is involved in the repair of mismatches in DNA. It is required for dam-dependent methyl-directed DNA mismatch repair. May act as a 'molecular matchmaker', a protein that promotes the formation of a stable complex between two or more DNA-binding proteins in an ATP-dependent manner without itself being part of a final effector complex. This chain is DNA mismatch repair protein MutL, found in Bradyrhizobium diazoefficiens (strain JCM 10833 / BCRC 13528 / IAM 13628 / NBRC 14792 / USDA 110).